A 323-amino-acid chain; its full sequence is Acetyl-coenzyme A carboxylase carboxyl transferase subunit alpha (323 aa).

The CoA carboxyltransferase C-terminal domain maps to 35–296; it reads EVLSELDELR…GMTLKKCLDE (262 aa).

The protein belongs to the AccA family. Acetyl-CoA carboxylase is a heterohexamer composed of biotin carboxyl carrier protein (AccB), biotin carboxylase (AccC) and two subunits each of ACCase subunit alpha (AccA) and ACCase subunit beta (AccD).

It is found in the cytoplasm. It carries out the reaction N(6)-carboxybiotinyl-L-lysyl-[protein] + acetyl-CoA = N(6)-biotinyl-L-lysyl-[protein] + malonyl-CoA. It functions in the pathway lipid metabolism; malonyl-CoA biosynthesis; malonyl-CoA from acetyl-CoA: step 1/1. Functionally, component of the acetyl coenzyme A carboxylase (ACC) complex. First, biotin carboxylase catalyzes the carboxylation of biotin on its carrier protein (BCCP) and then the CO(2) group is transferred by the carboxyltransferase to acetyl-CoA to form malonyl-CoA. The chain is Acetyl-coenzyme A carboxylase carboxyl transferase subunit alpha from Aquifex aeolicus (strain VF5).